A 159-amino-acid polypeptide reads, in one-letter code: Protein E6 (159 aa).

Zinc fingers lie at residues 35-71 and 108-144; these read CVYC…CGKC and CYIC…CMQC.

It belongs to the papillomaviridae E6 protein family. Forms homodimers. Interacts with ubiquitin-protein ligase UBE3A/E6-AP; this interaction stimulates UBE3A ubiquitin activity. Interacts with host TP53 and EP300; this interaction inhibits TP53 activity.

Its subcellular location is the host cytoplasm. The protein resides in the host nucleus. In terms of biological role, plays a major role in the induction and maintenance of cellular transformation. E6 associates with host UBE3A/E6-AP ubiquitin-protein ligase and modulates its activity. Sequesters tumor suppressor TP53 in the host cytoplasm and modulates its activity by interacting with host EP300 that results in the reduction of TP53 acetylation and activation. In turn, apoptosis induced by DNA damage is inhibited. E6 also protects host keratinocytes from apoptosis by mediating the degradation of host BAK1. May also inhibit host immune response. The sequence is that of Protein E6 from Homo sapiens (Human).